Reading from the N-terminus, the 242-residue chain is MATVSMRDMLKAGVHFGHQTRYWNPKMKPFIFGARNKVHIINLEQTVPMFNEALAELAKIGSKKGKVLFVGTKRAASEAVKEAAINSDQFYVNNRWLGGMLTNYKTVRQSIKRLKDFEVQSQDGTFEKLTKKEALMRTRDMEKLEKSLGGIKNMNGLPDALFVIDADHEHIAIKEANNLGIPVFAVVDTNSNPDGVDYIIPGNDDAIRAIQLYLNAAADAVKSGRNQDVAAVAEKDGFVEAE.

Belongs to the universal ribosomal protein uS2 family.

The sequence is that of Small ribosomal subunit protein uS2 from Aliivibrio fischeri (strain ATCC 700601 / ES114) (Vibrio fischeri).